The sequence spans 217 residues: U2 snRNP component ist3 (217 aa).

In terms of domain architecture, RRM spans 31-109 (AYIYIGNLDF…RLVRVDHVAS (79 aa)). 2 disordered regions span residues 119–138 (PANL…STIN) and 154–217 (EVEQ…DLDG). The segment covering 128-138 (SGSSLSVSTIN) has biased composition (polar residues). Ser160 bears the Phosphoserine mark. Composition is skewed to basic and acidic residues over residues 161–176 (PKDE…DYIH) and 185–198 (HESS…DSNR). A compositionally biased stretch (basic residues) spans 199–217 (HSRHHRRHSRSRRHRDLDG).

Belongs to the IST3 family. As to quaternary structure, belongs to the 40S cdc5-associated complex (or cwf complex), a spliceosome sub-complex reminiscent of a late-stage spliceosome composed of the U2, U5 and U6 snRNAs and at least brr2, cdc5, cwf2/prp3, cwf3/syf1, cwf4/syf3, cwf5/ecm2, spp42/cwf6, cwf7/spf27, cwf8, cwf9, cwf10, cwf11, cwf12, prp45/cwf13, cwf14, cwf15, cwf16, cwf17, cwf18, cwf19, cwf20, cwf21, cwf22, cwf23, cwf24, cwf25, cwf26, cyp7/cwf27, cwf28, cwf29/ist3, lea1, msl1, prp5/cwf1, prp10, prp12/sap130, prp17, prp22, sap61, sap62, sap114, sap145, slu7, smb1, smd1, smd3, smf1, smg1 and syf2.

Its subcellular location is the nucleus. In terms of biological role, required for pre-mRNA splicing and spliceosome assembly. The chain is U2 snRNP component ist3 (cwf29) from Schizosaccharomyces pombe (strain 972 / ATCC 24843) (Fission yeast).